Consider the following 115-residue polypeptide: Large ribosomal subunit protein bL19 (115 aa).

The protein belongs to the bacterial ribosomal protein bL19 family.

Its function is as follows. This protein is located at the 30S-50S ribosomal subunit interface and may play a role in the structure and function of the aminoacyl-tRNA binding site. The protein is Large ribosomal subunit protein bL19 (rplS) of Buchnera aphidicola subsp. Acyrthosiphon pisum (strain APS) (Acyrthosiphon pisum symbiotic bacterium).